Here is a 1156-residue protein sequence, read N- to C-terminus: MTEVEQPPQNGIDPTAGEDDDNSKARPADIEQDMREMERRKRVEAIMGSKLFREELERIVDSARDGGAGASGILQQLSDIVGVPVSRVGSVFKSSNCMVPINDIRGVESMGYAKGEKILRCKLAATFRLLDLYGWTQGLGAQITARLKVDQEYFLVNPYGLLYHEITASALNKVDMQGQIVEQGTTNFGGNKSHFVLHSVVHAARPDIRCAIYIGCSPVVAISSLKTGLLPLTKDACVLGEITTHAYTGLFDEEERNRLVRSLGPNSKVILLTNHGALCCGETIEEAFFAACHIVQACETQLKLLPVGLDNLVLIPEESRKAIYEQSRRPPEDLEKKFAAVAAAEDGAATAEKDAAEAVPKVGSPPKWRVGGAEFEALMRMLDNAGYRTGYIYRHPLIKSDPPKPKNDVELPPAVSSLGYLLEEEELFRQGIWKKGDIRKGGDRSRWLNSPNVYQKVEVLETGTPDPKKITKWVAEGSPTHSTPVRIEDPLQFVPAGTNPREFKRVQQLIKDNRRADKISAGPQSHILEGVTWDEASRLKDATVSQAGDHVVMMGAASKGIIQRGFQHNATVYKAPYAKNPFDNVTDDELNEYKRTVERKKKSVHGEYTDTDFSESEAVLQAGTKKYPQSEPETEHQVIEIQTQQAPVPRQAEVVLSDALVSQLAQKYAFLYSPGQYMYACMKMAPLMHKVYVIHKVEPVSKHNYPPVNDGNMSIHHNESGAGFMAQESSVISSTPVRNALASVSLPEERNHSILGLSSTPYRTISHFGFNCPLITSPTILLHPEHRSIWQRVAEQREKVVSFIDLTTLSLDNRKLLNVVTSTHPTQCQSQSQSFISEKHIQLEVTPPKRKQRVYSATISSGLDDSLDELDSLMSGLAINMPRSREQDSGLYRSYTFLPSNHALPKDTDANNRDQTDRERPEAEQEESFHCAGDSGIGDSTGRRPRLATTSNDSSIQEAEAYTQGKHVKLTLSSSPTPTATQSPATIEILINVSLRNAECVQTVQTHEQEFRAKLERVIDEEIHYISQQLAFKQRQAELHEQQTTSRAPIATPSFTTMHPPAPASSSSMVHRSNSAPELCHTYSYVAVGDLSTKQDQASPQLPAEGEPLNDILSSLEKELERLLNSVVTAHMLHNKAIIHECRARFSQLADGIVSS.

Positions 1-36 (MTEVEQPPQNGIDPTAGEDDDNSKARPADIEQDMRE) are disordered. The segment covering 22-36 (NSKARPADIEQDMRE) has biased composition (basic and acidic residues). S478 carries the phosphoserine modification. 2 positions are modified to phosphothreonine: T480 and T498. S603 bears the Phosphoserine mark. Residue Y608 is modified to Phosphotyrosine. Residues T609 and T611 each carry the phosphothreonine modification. A Phosphoserine modification is found at S614. At Y627 the chain carries Phosphotyrosine. S630 is modified (phosphoserine). The segment at 897-956 (FLPSNHALPKDTDANNRDQTDRERPEAEQEESFHCAGDSGIGDSTGRRPRLATTSNDSSI) is disordered. The span at 904-929 (LPKDTDANNRDQTDRERPEAEQEESF) shows a compositional bias: basic and acidic residues.

This sequence belongs to the aldolase class II family. Adducin subfamily. In terms of tissue distribution, isoform C is expressed in nurse cells. Isoform A is produced in the nurse cell but transported into the oocyte at stage 1, localizes to the oocyte cortex at stage 8 and to the anterior pole from day 9 onwards. Isoform B is expressed in the somatic follicle cells that surround the germline.

The protein localises to the cytoplasm. The protein resides in the cytoskeleton. It is found in the cell membrane. Required for assembling actin at ring canals in developing egg chambers. Probably interacts with other developmental proteins involved in nurse cell/oocyte transport through the ring canals. Important for normal neuromotor function. The sequence is that of Protein hu-li tai shao (hts) from Drosophila melanogaster (Fruit fly).